The chain runs to 485 residues: Glutamyl-tRNA(Gln) amidotransferase subunit A (485 aa).

Catalysis depends on charge relay system residues Lys-79 and Ser-154. The active-site Acyl-ester intermediate is Ser-178.

This sequence belongs to the amidase family. GatA subfamily. As to quaternary structure, heterotrimer of A, B and C subunits.

The enzyme catalyses L-glutamyl-tRNA(Gln) + L-glutamine + ATP + H2O = L-glutaminyl-tRNA(Gln) + L-glutamate + ADP + phosphate + H(+). In terms of biological role, allows the formation of correctly charged Gln-tRNA(Gln) through the transamidation of misacylated Glu-tRNA(Gln) in organisms which lack glutaminyl-tRNA synthetase. The reaction takes place in the presence of glutamine and ATP through an activated gamma-phospho-Glu-tRNA(Gln). The protein is Glutamyl-tRNA(Gln) amidotransferase subunit A of Clostridium botulinum (strain Eklund 17B / Type B).